The primary structure comprises 453 residues: MFARVFKAMPARAPAFTSVNASIQSRFMATVRQGRPATERATFTIRDGPIFHGKSFGARSNISGEAVFTTSLVGYPESLTDPSYRGQILVFTQPLIGNYGVPSAERDQHGLLKYFESPNLQAAGVVVADVAEQYSHWTAVESLGEWCAREGVPAISGVDTRAIVTYLREQGSSLARITVGEEYDADQDEAFVDPEQIHLVRQVSTKAPFHVSAADPQCHVAVIDCGVKENILRSLVSRGASITVFPFDYPIHKVAHHFDGVFISNGPGDPTHCQDTVYHLRRLMETSQVPIFGICLGHQLLALANGARTIKLKYGNRAHNIPALDTTTGRCHITSQNHGYAVDASTLPSDWKPYFVNLNDSSNEGMIHKTRPIFSTQFHPEAKGGPLDSSYLFDIYLDSVVKYKNHQLAFHPNRNTVPSPLLVDLLAKERVGVQPTIGMQNVAAAAAAAVAAA.

Residues 1-28 (MFARVFKAMPARAPAFTSVNASIQSRFM) constitute a mitochondrion transit peptide. Positions 219–406 (HVAVIDCGVK…LDSVVKYKNH (188 aa)) constitute a Glutamine amidotransferase type-1 domain. C295 (nucleophile) is an active-site residue. Active-site residues include H379 and E381.

It belongs to the CarA family. Heterodimer composed of 2 chains; the small (or glutamine) chain promotes the hydrolysis of glutamine to ammonia, which is used by the large (or ammonia) chain to synthesize carbamoyl phosphate.

It is found in the mitochondrion matrix. It catalyses the reaction hydrogencarbonate + L-glutamine + 2 ATP + H2O = carbamoyl phosphate + L-glutamate + 2 ADP + phosphate + 2 H(+). The catalysed reaction is L-glutamine + H2O = L-glutamate + NH4(+). The protein operates within amino-acid biosynthesis; L-arginine biosynthesis; carbamoyl phosphate from bicarbonate: step 1/1. Its function is as follows. Small subunit of the arginine-specific carbamoyl phosphate synthase (CPSase). CPSase catalyzes the formation of carbamoyl phosphate from the ammonia moiety of glutamine, carbonate, and phosphate donated by ATP, the first step of the arginine biosynthetic pathway. The small subunit (glutamine amidotransferase) binds and cleaves glutamine to supply the large subunit with the substrate ammonia. In Aspergillus niger (strain ATCC MYA-4892 / CBS 513.88 / FGSC A1513), this protein is Carbamoyl phosphate synthase arginine-specific small chain (cpa1).